Reading from the N-terminus, the 196-residue chain is MSRYRGPRLKKIRRLGALPGLTRKTPKSGSNPKKKFHSGKKEQYRIRLQEKQKLRFHYGLTERQLLRYVYIAGKAKRSTGQVLLQLLEMRLDNILFRLGMASTIPGARQLVNHRHILVNGRIVNIPSFRCKPRDIITTKDNQRSKGLVQNSIASSDPGKLPKHLTIDTLEYKGLVNKILDRKWVGLKINELLVVEY.

Residues 1-14 (MSRYRGPRLKKIRR) are compositionally biased toward basic residues. Residues 1–43 (MSRYRGPRLKKIRRLGALPGLTRKTPKSGSNPKKKFHSGKKEQ) form a disordered region. Positions 89-169 (MRLDNILFRL…LPKHLTIDTL (81 aa)) constitute an S4 RNA-binding domain.

The protein belongs to the universal ribosomal protein uS4 family. Part of the 30S ribosomal subunit. Contacts protein S5. The interaction surface between S4 and S5 is involved in control of translational fidelity.

It is found in the plastid. Its subcellular location is the chloroplast. One of the primary rRNA binding proteins, it binds directly to 16S rRNA where it nucleates assembly of the body of the 30S subunit. In terms of biological role, with S5 and S12 plays an important role in translational accuracy. The chain is Small ribosomal subunit protein uS4c (rps4) from Melica uniflora (Wood melick grass).